The primary structure comprises 283 residues: ATP synthase gamma chain (283 aa).

Belongs to the ATPase gamma chain family. As to quaternary structure, F-type ATPases have 2 components, CF(1) - the catalytic core - and CF(0) - the membrane proton channel. CF(1) has five subunits: alpha(3), beta(3), gamma(1), delta(1), epsilon(1). CF(0) has three main subunits: a, b and c.

The protein localises to the cell inner membrane. Its function is as follows. Produces ATP from ADP in the presence of a proton gradient across the membrane. The gamma chain is believed to be important in regulating ATPase activity and the flow of protons through the CF(0) complex. The protein is ATP synthase gamma chain of Ehrlichia ruminantium (strain Welgevonden).